A 379-amino-acid polypeptide reads, in one-letter code: Small ribosomal subunit protein uS2cy (379 aa).

An N-terminal extension region spans residues 1 to 94; it reads MKLVQFFEIG…MGTSSNRAKS (94 aa). The disordered stretch occupies residues 83 to 106; sequence NQMGTSSNRAKSTDTPAVSTSQNV.

The protein belongs to the universal ribosomal protein uS2 family.

Its subcellular location is the plastid. The protein localises to the chloroplast. The polypeptide is Small ribosomal subunit protein uS2cy (rps2-2) (Tetradesmus obliquus (Green alga)).